The following is a 713-amino-acid chain: Phospholipase A1 PLIP2, chloroplastic (713 aa).

The N-terminal 32 residues, 1-32 (MDSLCLNSGLHGVIPAITAVGNGGCGGVVEVR), are a transit peptide targeting the chloroplast. Disordered regions lie at residues 118 to 140 (WKHEEEEDDDEVEDEDGDEDEEV) and 232 to 261 (ALKAENGEVSGETKPIVEAEEEVEEEEKNK). Over residues 122–140 (EEEDDDEVEDEDGDEDEEV) the composition is skewed to acidic residues. Residues 426–430 (GHSLG) carry the GXSXG motif. Ser-428 (acyl-ester intermediate) is an active-site residue. Catalysis depends on charge relay system residues Asp-489 and His-608.

It belongs to the AB hydrolase superfamily. Lipase family.

The protein resides in the plastid. It localises to the chloroplast membrane. Its subcellular location is the chloroplast stroma. It catalyses the reaction a 1,2-diacyl-3-O-(beta-D-galactosyl)-sn-glycerol + 2 H2O = 3-beta-D-galactosyl-sn-glycerol + 2 a fatty acid + 2 H(+). The enzyme catalyses a 1,2-diacyl-sn-glycero-3-phosphocholine + H2O = a 2-acyl-sn-glycero-3-phosphocholine + a fatty acid + H(+). The catalysed reaction is 1-hexadecanoyl-2-(9Z-octadecenoyl)-sn-glycero-3-phosphocholine + H2O = 2-(9Z-octadecenoyl)-sn-glycero-3-phosphocholine + hexadecanoate + H(+). It carries out the reaction 1,2-di-(9Z-octadecenoyl)-sn-glycero-3-phosphocholine + H2O = 2-(9Z-octadecenoyl)-sn-glycero-3-phosphocholine + (9Z)-octadecenoate + H(+). It catalyses the reaction 1-octadecanoyl-2-(9Z-octadecenoyl)-sn-glycero-3-phosphocholine + H2O = 2-(9Z-octadecenoyl)-sn-glycero-3-phosphocholine + octadecanoate + H(+). The enzyme catalyses 1-octadecanoyl-2-(9Z,12Z)-octadecadienoyl-sn-glycero-3-phosphocholine + H2O = 2-(9Z,12Z-octadecadienoyl)-sn-glycero-3-phosphocholine + octadecanoate + H(+). The catalysed reaction is 1,2-di-(9Z,12Z-octadecadienoyl)-sn-glycero-3-phosphocholine + H2O = 2-(9Z,12Z-octadecadienoyl)-sn-glycero-3-phosphocholine + (9Z,12Z)-octadecadienoate + H(+). It carries out the reaction 1-(9Z-octadecenoyl)-2-hexadecanoyl-sn-glycero-3-phosphocholine + H2O = 2-hexadecanoyl-sn-glycero-3-phosphocholine + (9Z)-octadecenoate + H(+). In terms of biological role, sn-1-specific phospholipase A1 that catalyzes the initial step of oxylipins and jasmonate (JA) biosynthesis. Hydrolyzes polyunsaturated acyl groups preferentially from chloroplastic monogalactosyldiacylglycerol (MGDG). May function downstream of abscisic acid (ABA) and provide a link between ABA-mediated abiotic stress responses and oxylipin and JA signalings. In vitro, possesses broad substrate specificity. Can hydrolyze the galactolipids monogalactosyldiacylglycerol (MGDG) and digalactosyldiacylglycerol (DGDG), the sulfolipid sulfoquinovosyldiacylglycerol (SQDG), and the phoshpolipids phosphatidylcholine (PC), and phosphatidylglycerol (PG). This Arabidopsis thaliana (Mouse-ear cress) protein is Phospholipase A1 PLIP2, chloroplastic.